The sequence spans 59 residues: Small ribosomal subunit protein bS21 (59 aa).

A disordered region spans residues 40–59 (KPSIKKRAKSKAALKYKKQR).

This sequence belongs to the bacterial ribosomal protein bS21 family.

The protein is Small ribosomal subunit protein bS21 of Protochlamydia amoebophila (strain UWE25).